The chain runs to 419 residues: Acyl-coenzyme A thioesterase 6 (419 aa).

Catalysis depends on charge relay system residues S232, D324, and H358. Positions 417–419 (SKL) match the Peroxisome targeting signal motif.

The protein belongs to the C/M/P thioester hydrolase family. Highly expressed in white adipose tissue. Detected at lower levels in kidney, liver, brown adipose tissue and brain.

It is found in the peroxisome. The enzyme catalyses pristanoyl-CoA + H2O = 2,6,10,14-tetramethylpentadecanoate + CoA + H(+). The catalysed reaction is phytanoyl-CoA + H2O = 3,7,11,15-tetramethylhexadecanoate + CoA + H(+). Its pathway is lipid metabolism; fatty acid metabolism. Catalyzes the hydrolysis of acyl-CoAs into free fatty acids and coenzyme A (CoASH), regulating their respective intracellular levels. Catalyzes the hydrolysis of phytanoyl-CoA and pristanoyl-CoA, two methyl-branched fatty acids derived from phytol, that enter the body via the diet. This is Acyl-coenzyme A thioesterase 6 from Mus musculus (Mouse).